The primary structure comprises 488 residues: Glutamyl-tRNA(Gln) amidotransferase subunit A (488 aa).

Active-site charge relay system residues include Lys77 and Ser152. Catalysis depends on Ser176, which acts as the Acyl-ester intermediate.

This sequence belongs to the amidase family. GatA subfamily. Heterotrimer of A, B and C subunits.

It carries out the reaction L-glutamyl-tRNA(Gln) + L-glutamine + ATP + H2O = L-glutaminyl-tRNA(Gln) + L-glutamate + ADP + phosphate + H(+). Its function is as follows. Allows the formation of correctly charged Gln-tRNA(Gln) through the transamidation of misacylated Glu-tRNA(Gln) in organisms which lack glutaminyl-tRNA synthetase. The reaction takes place in the presence of glutamine and ATP through an activated gamma-phospho-Glu-tRNA(Gln). This is Glutamyl-tRNA(Gln) amidotransferase subunit A from Streptococcus agalactiae serotype III (strain NEM316).